A 551-amino-acid polypeptide reads, in one-letter code: Frizzled-2 (551 aa).

An N-terminal signal peptide occupies residues 1–26 (MQGVTRASILLIIYHLFTLSLGQLHG). Over 27–231 (EKGISVPEHG…FSQDEIRFAR (205 aa)) the chain is Extracellular. Residues 33–152 (PEHGFCQPIS…HGAEQICVGQ (120 aa)) enclose the FZ domain. Cystine bridges form between Cys38–Cys99, Cys46–Cys92, Cys83–Cys120, Cys109–Cys149, and Cys113–Cys137. The N-linked (GlcNAc...) asparagine glycan is linked to Asn52. A glycan (N-linked (GlcNAc...) asparagine) is linked at Asn153. A helical transmembrane segment spans residues 232–252 (IWILIWSVLCCASTFITVTTY). The Cytoplasmic portion of the chain corresponds to 253–265 (LVDMQRFRYPERP). A helical membrane pass occupies residues 266 to 286 (IIFLSGCYTMVSVAYIAGFVL). Topologically, residues 287–313 (GDKVVCNEGFSEDGYKTVVQGTKKEGC) are extracellular. Residues 314-334 (TILFMMLYFFSMASSIWWVIL) traverse the membrane as a helical segment. Residues 335 to 356 (SLTWFLAAGMKWGHEAIEANSQ) lie on the Cytoplasmic side of the membrane. Residues 357–377 (YFHLAAWAVPAVKTITILAMG) form a helical membrane-spanning segment. Residues 378–400 (QIDGDLLSGVCFVGLNNIDPLRG) lie on the Extracellular side of the membrane. Residues 401-421 (FVLAPLFVYLFIGTSFLLAGF) traverse the membrane as a helical segment. Over 422 to 447 (VSLFRIRTIMKHDGTKTEKLERLMVR) the chain is Cytoplasmic. The helical transmembrane segment at 448 to 468 (IGVFSVLYTVPATIVIACYFY) threads the bilayer. Topologically, residues 469 to 505 (EQAFREHWERSWVSQNCKSLAIPCPLQYTPRMTPDFT) are extracellular. The chain crosses the membrane as a helical span at residues 506–526 (VYMIKYLMTLIVGITSGFWIW). Residues 527 to 534 (SGKTLHSW) are Cytoplasmic-facing. Positions 529-534 (KTLHSW) match the Lys-Thr-X-X-X-Trp motif, mediates interaction with the PDZ domain of Dvl family members motif. The short motif at 549–551 (TTV) is the PDZ-binding element.

The protein belongs to the G-protein coupled receptor Fz/Smo family. Widely expressed, especially in the eye anlage, otic vesicle and developing somites.

It localises to the membrane. The protein resides in the cell membrane. Its function is as follows. Receptor for Wnt proteins. Most of frizzled receptors are coupled to the beta-catenin canonical signaling pathway, which leads to the activation of disheveled proteins, inhibition of GSK-3 kinase, nuclear accumulation of beta-catenin and activation of Wnt target genes. A second signaling pathway involving PKC and calcium fluxes has been seen for some family members, but it is not yet clear if it represents a distinct pathway or if it can be integrated in the canonical pathway, as PKC seems to be required for Wnt-mediated inactivation of GSK-3 kinase. Both pathways seem to involve interactions with G-proteins. May be involved in transduction and intercellular transmission of polarity information during tissue morphogenesis and/or in differentiated tissues. The sequence is that of Frizzled-2 (fzd2) from Xenopus laevis (African clawed frog).